Here is a 108-residue protein sequence, read N- to C-terminus: Large ribosomal subunit protein uL22 (108 aa).

The protein belongs to the universal ribosomal protein uL22 family. Part of the 50S ribosomal subunit.

In terms of biological role, this protein binds specifically to 23S rRNA; its binding is stimulated by other ribosomal proteins, e.g. L4, L17, and L20. It is important during the early stages of 50S assembly. It makes multiple contacts with different domains of the 23S rRNA in the assembled 50S subunit and ribosome. The globular domain of the protein is located near the polypeptide exit tunnel on the outside of the subunit, while an extended beta-hairpin is found that lines the wall of the exit tunnel in the center of the 70S ribosome. This Nitratiruptor sp. (strain SB155-2) protein is Large ribosomal subunit protein uL22.